Here is a 187-residue protein sequence, read N- to C-terminus: UPF0301 protein Ppha_2142 (187 aa).

This sequence belongs to the UPF0301 (AlgH) family.

This chain is UPF0301 protein Ppha_2142, found in Pelodictyon phaeoclathratiforme (strain DSM 5477 / BU-1).